A 572-amino-acid chain; its full sequence is Ribonuclease Y (572 aa).

The helical transmembrane segment at 1–21 threads the bilayer; that stretch reads MPTLYVILSLLLGLIGGVLVQ. 2 disordered regions span residues 59–85 and 110–142; these read HEAAEQDRQDAISKTQDAARRVQDAAE and QLEAEREQAKADAAQQREALSTDRQETRRERED. 2 stretches are compositionally biased toward basic and acidic residues: residues 110–119 and 129–142; these read QLEAEREQAK and LSTDRQETRRERED. The 61-residue stretch at 262–322 folds into the KH domain; that stretch reads SVSVVPIPSD…LRREVARHVL (61 aa). One can recognise an HD domain in the interval 388–481; the sequence is VLKHSVQVAH…VAAADAISAA (94 aa).

Belongs to the RNase Y family.

It is found in the cell membrane. Endoribonuclease that initiates mRNA decay. The sequence is that of Ribonuclease Y from Deinococcus radiodurans (strain ATCC 13939 / DSM 20539 / JCM 16871 / CCUG 27074 / LMG 4051 / NBRC 15346 / NCIMB 9279 / VKM B-1422 / R1).